The following is a 106-amino-acid chain: Immunity protein CdiI (106 aa).

Forms a contact-dependent growth inhibition complex of CdiA-CT-NC101, CdiI-NC101 and EF-Tu; the complex is a dimer of heterotrimers.

Immunity protein component of a toxin-immunity protein module, which functions as a cellular contact-dependent growth inhibition (CDI) system. CDI modules allow bacteria to communicate with and inhibit the growth of closely related neighboring bacteria in a contact-dependent fashion. Neutralizes the toxic activity of cognate toxin CdiA-NC101 (the C-terminal 154 residue CT fragment). Does not inhibit toxic activity of CdiA from other toxin-immunity modules or strains of E.coli. Mediates dimerization of the ternary CdiA-CT-NC101, CdiI-NC101 and EF-Tu complex; both CdiI molecules contact both EF-Tu molecules. The chain is Immunity protein CdiI from Escherichia coli (strain NC101).